A 999-amino-acid chain; its full sequence is Probable tape measure protein (999 aa).

It belongs to the skunalikevirus tape measure protein family.

It is found in the virion. Its function is as follows. Probable tape measure protein. Serves as a base for tail tube protein polymerization and acts as a template for tail length determination. The sequence is that of Probable tape measure protein from Lactococcus lactis (Lactococcus lactis bacteriophage SK1).